We begin with the raw amino-acid sequence, 438 residues long: Trigger factor (438 aa).

Residues 163 to 249 (EDFVLIDYEG…LKEIRKQILP (87 aa)) form the PPIase FKBP-type domain.

The protein belongs to the FKBP-type PPIase family. Tig subfamily.

It localises to the cytoplasm. It catalyses the reaction [protein]-peptidylproline (omega=180) = [protein]-peptidylproline (omega=0). Involved in protein export. Acts as a chaperone by maintaining the newly synthesized protein in an open conformation. Functions as a peptidyl-prolyl cis-trans isomerase. In Desulfatibacillum aliphaticivorans, this protein is Trigger factor.